Consider the following 287-residue polypeptide: Kit ligand (287 aa).

A signal peptide spans 1 to 25 (MKKAQTWIITCFCLQLLLLNPLVKT). Topologically, residues 26–225 (QSSCGNPVTD…LGFISSSSLQ (200 aa)) are extracellular. 2 disulfide bridges follow: cysteine 29–cysteine 117 and cysteine 68–cysteine 167. N-linked (GlcNAc...) asparagine glycans are attached at residues asparagine 100, asparagine 106, asparagine 149, asparagine 178, asparagine 200, and asparagine 206. A helical membrane pass occupies residues 226–246 (GISIALTSLLSLLIGFILGVI). The Cytoplasmic portion of the chain corresponds to 247-287 (YWKKTHPKSRPESNETTQCHGCQEENEISMLQQKEKEHLQV).

Belongs to the SCF family. In terms of assembly, homodimer, non-covalently linked. Post-translationally, a soluble form is produced by proteolytic processing of isoform 1 in the extracellular domain.

The protein localises to the cell membrane. It is found in the secreted. It localises to the cytoplasm. The protein resides in the cytoskeleton. Its subcellular location is the cell projection. The protein localises to the lamellipodium. It is found in the filopodium. Functionally, ligand for the receptor-type protein-tyrosine kinase KIT. Plays an essential role in the regulation of cell survival and proliferation, hematopoiesis, stem cell maintenance, gametogenesis, mast cell development, migration and function, and in melanogenesis. KITLG/SCF binding can activate several signaling pathways. Acts synergistically with other cytokines, probably interleukins. The chain is Kit ligand (KITLG) from Coturnix japonica (Japanese quail).